Consider the following 100-residue polypeptide: NADH-ubiquinone oxidoreductase chain 4L (100 aa).

3 helical membrane passes run 3 to 23 (LVKY…GIFL), 28 to 48 (ILIM…NFLV), and 62 to 82 (ALFV…ILVI).

Belongs to the complex I subunit 4L family. As to quaternary structure, complex I is composed of about 45 different subunits.

It is found in the mitochondrion membrane. The enzyme catalyses a ubiquinone + NADH + 5 H(+)(in) = a ubiquinol + NAD(+) + 4 H(+)(out). Functionally, core subunit of the mitochondrial membrane respiratory chain NADH dehydrogenase (Complex I) that is believed to belong to the minimal assembly required for catalysis. Complex I functions in the transfer of electrons from NADH to the respiratory chain. The immediate electron acceptor for the enzyme is believed to be ubiquinone. The protein is NADH-ubiquinone oxidoreductase chain 4L (ND4L) of Marchantia polymorpha (Common liverwort).